We begin with the raw amino-acid sequence, 96 residues long: UPF0358 protein Aflv_1873 (96 aa).

The protein belongs to the UPF0358 family.

This chain is UPF0358 protein Aflv_1873, found in Anoxybacillus flavithermus (strain DSM 21510 / WK1).